The sequence spans 289 residues: Somatostatin-like receptor F_48D10.1 (289 aa).

Topologically, residues 1–57 (MEPLDQTPGFPLSPEPNYWYETTPSLLLVSYPHLLDISSNQSTQSVPFQGSSALLTA) are extracellular. Asparagine 40 carries an N-linked (GlcNAc...) asparagine glycan. The helical transmembrane segment at 58 to 79 (VIYITVFVVGLTGNTLAIYVVL) threads the bilayer. Over 80–89 (RYAGMKTVTN) the chain is Cytoplasmic. A helical membrane pass occupies residues 90-110 (IYILNLAVADELYIVGLPFLA). Residues 111 to 126 (TQNVLSYWPFGSFLCR) lie on the Extracellular side of the membrane. Residues cysteine 125 and cysteine 221 are joined by a disulfide bond. The chain crosses the membrane as a helical span at residues 127–148 (VVMTADSMNQFTSIFCLTVMSI). The Cytoplasmic segment spans residues 149-170 (DRYLAVVHPIRSTKWRHPRVAK). The chain crosses the membrane as a helical span at residues 171-191 (VVSAAVWAVSFVVVLPVVIFS). At 192–240 (DVQVRPSRPLQVGTSSKCLVKRVQETFNSCNMIWPEPKNVWSTAFILYT) the chain is on the extracellular side. A helical transmembrane segment spans residues 241-261 (AMVGFFGPLLIICLCYLLIVI). Residues 262–289 (KVRHRMSAAQVGAVVSTCPLNICCLSRR) are Cytoplasmic-facing.

Belongs to the G-protein coupled receptor 1 family.

The protein localises to the cell membrane. The protein is Somatostatin-like receptor F_48D10.1 of Takifugu rubripes (Japanese pufferfish).